The sequence spans 323 residues: L-lactate dehydrogenase (323 aa).

NAD(+) contacts are provided by residues V18, D39, R44, Y69, and 83-84 (GA). Residues Q86 and R92 each coordinate substrate. NAD(+) contacts are provided by residues T105, 122-124 (AAN), and S147. 124 to 127 (NPVD) provides a ligand contact to substrate. Residue 152-155 (DTAR) coordinates substrate. The Proton acceptor role is filled by H179. Phosphotyrosine is present on Y223. T232 contacts substrate.

This sequence belongs to the LDH/MDH superfamily. LDH family. As to quaternary structure, homotetramer.

Its subcellular location is the cytoplasm. It carries out the reaction (S)-lactate + NAD(+) = pyruvate + NADH + H(+). It participates in fermentation; pyruvate fermentation to lactate; (S)-lactate from pyruvate: step 1/1. In terms of biological role, catalyzes the conversion of lactate to pyruvate. The sequence is that of L-lactate dehydrogenase from Pediococcus acidilactici.